The following is a 617-amino-acid chain: UvrABC system protein C (617 aa).

The GIY-YIG domain maps to K22–I100. The UVR domain occupies D209–I244.

This sequence belongs to the UvrC family. Interacts with UvrB in an incision complex.

It is found in the cytoplasm. The UvrABC repair system catalyzes the recognition and processing of DNA lesions. UvrC both incises the 5' and 3' sides of the lesion. The N-terminal half is responsible for the 3' incision and the C-terminal half is responsible for the 5' incision. The chain is UvrABC system protein C from Neisseria gonorrhoeae (strain ATCC 700825 / FA 1090).